Consider the following 423-residue polypeptide: Mannose-6-phosphate isomerase (423 aa).

At Ala-2 the chain carries N-acetylalanine. Phosphoserine occurs at positions 102 and 108. Zn(2+) contacts are provided by Gln-110, His-112, Glu-137, and His-276. The active site involves Arg-295.

The protein belongs to the mannose-6-phosphate isomerase type 1 family. Zn(2+) serves as cofactor.

It is found in the cytoplasm. The enzyme catalyses D-mannose 6-phosphate = D-fructose 6-phosphate. It functions in the pathway nucleotide-sugar biosynthesis; GDP-alpha-D-mannose biosynthesis; alpha-D-mannose 1-phosphate from D-fructose 6-phosphate: step 1/2. Isomerase that catalyzes the interconversion of fructose-6-P and mannose-6-P and has a critical role in the supply of D-mannose derivatives required for many eukaryotic glycosylation reactions. The sequence is that of Mannose-6-phosphate isomerase (MPI) from Pan troglodytes (Chimpanzee).